The primary structure comprises 268 residues: MARFETLFAQLNAKKQGGFVPFVTLCDPDLERSFDIICTLVDNGADALELGFPFSDPLLDGPVIQAANNRALNAGCSTAESFKLLEKVRSKYPEIPIGLLLCANLIYAQTLDGFYRRCAEIGIDAVLVADIPLLAAEPYIQAAKKHGIQPVFICPPNADENTVKGVAEHSEGYTYLVSRAGVTSAENQSHAANLDSLVEQLKAHNAPPILQGFGIAKPQQVKEALNMGVAGAISGSATVKIIEANLDNHEKCLADLAEFVKNMKAATL.

Residues Glu49 and Asp60 each act as proton acceptor in the active site.

This sequence belongs to the TrpA family. In terms of assembly, tetramer of two alpha and two beta chains.

It carries out the reaction (1S,2R)-1-C-(indol-3-yl)glycerol 3-phosphate + L-serine = D-glyceraldehyde 3-phosphate + L-tryptophan + H2O. Its pathway is amino-acid biosynthesis; L-tryptophan biosynthesis; L-tryptophan from chorismate: step 5/5. The alpha subunit is responsible for the aldol cleavage of indoleglycerol phosphate to indole and glyceraldehyde 3-phosphate. The protein is Tryptophan synthase alpha chain of Mannheimia succiniciproducens (strain KCTC 0769BP / MBEL55E).